Consider the following 24-residue polypeptide: Prokineticin 1-like protein (24 aa).

Cys-7 and Cys-19 are joined by a disulfide.

In terms of tissue distribution, expressed by the skin glands.

The protein localises to the secreted. Its function is as follows. Stimulates insulin secretion by BRIN-BD11 cells in vitro. The chain is Prokineticin 1-like protein from Pelophylax saharicus (Sahara frog).